The following is a 202-amino-acid chain: dITP/XTP pyrophosphatase (202 aa).

7–12 (SRNEAK) provides a ligand contact to substrate. D68 acts as the Proton acceptor in catalysis. D68 is a binding site for Mg(2+). Substrate is bound by residues S69, 156 to 159 (FGYD), K179, and 184 to 185 (HR).

Belongs to the HAM1 NTPase family. In terms of assembly, homodimer. Mg(2+) serves as cofactor.

The enzyme catalyses XTP + H2O = XMP + diphosphate + H(+). The catalysed reaction is dITP + H2O = dIMP + diphosphate + H(+). It carries out the reaction ITP + H2O = IMP + diphosphate + H(+). Functionally, pyrophosphatase that catalyzes the hydrolysis of nucleoside triphosphates to their monophosphate derivatives, with a high preference for the non-canonical purine nucleotides XTP (xanthosine triphosphate), dITP (deoxyinosine triphosphate) and ITP. Seems to function as a house-cleaning enzyme that removes non-canonical purine nucleotides from the nucleotide pool, thus preventing their incorporation into DNA/RNA and avoiding chromosomal lesions. The chain is dITP/XTP pyrophosphatase from Frankia alni (strain DSM 45986 / CECT 9034 / ACN14a).